We begin with the raw amino-acid sequence, 490 residues long: Proline--tRNA ligase (490 aa).

This sequence belongs to the class-II aminoacyl-tRNA synthetase family. ProS type 3 subfamily. Homodimer.

The protein resides in the cytoplasm. The enzyme catalyses tRNA(Pro) + L-proline + ATP = L-prolyl-tRNA(Pro) + AMP + diphosphate. Functionally, catalyzes the attachment of proline to tRNA(Pro) in a two-step reaction: proline is first activated by ATP to form Pro-AMP and then transferred to the acceptor end of tRNA(Pro). The chain is Proline--tRNA ligase from Salinibacter ruber (strain DSM 13855 / M31).